The chain runs to 81 residues: Defensin-like protein 43 (81 aa).

The signal sequence occupies residues Met1–Ala27. 4 disulfide bridges follow: Cys40–Cys79, Cys44–Cys67, Cys53–Cys77, and Cys57–Cys78.

Belongs to the DEFL family.

It localises to the secreted. The sequence is that of Defensin-like protein 43 from Arabidopsis thaliana (Mouse-ear cress).